We begin with the raw amino-acid sequence, 456 residues long: MGQTLFDKVWNRHVLYGKLGEPQLLYIDLHLIHEVTSPQAFEGLRLQNRKLRRPDLTFATLDHNVPTIDIFNIKDEIANKQITTLQKNAIDFGVHIFDMGSDEQGIVHMVGPETGLTQPGKTIVCGDSHTATHGAFGAIAFGIGTSEVEHVFATQTLWQTKPKNLKIDINGTLPTGVYAKDIILHLIKTYGVDFGTGYALEFTGETIKNLSMDGRMTICNMAIEGGAKYGIIQPDDITFEYVKGRPFADNFVKSVDKWRELYSDDDAIFDRVIELDVSTLEPQVTWGTNPEMGVNFSEPFPEISDINDQRAYDYMGLEPGQKAEDIDLGYVFLGSCTNARLSDLIEASHIVKGNKVHPNITAIVVPGSRTVKKEAEKLGLDTIFKNAGFEWREPGCSMCLGMNPDQVPEGVHCASTSNRNFEGRQGKGARTHLVSPAMAAAAAIHGKFVDVRKVVV.

Residues cysteine 336, cysteine 396, and cysteine 399 each coordinate [4Fe-4S] cluster.

Belongs to the aconitase/IPM isomerase family. LeuC type 1 subfamily. As to quaternary structure, heterodimer of LeuC and LeuD. [4Fe-4S] cluster serves as cofactor.

It carries out the reaction (2R,3S)-3-isopropylmalate = (2S)-2-isopropylmalate. It functions in the pathway amino-acid biosynthesis; L-leucine biosynthesis; L-leucine from 3-methyl-2-oxobutanoate: step 2/4. In terms of biological role, catalyzes the isomerization between 2-isopropylmalate and 3-isopropylmalate, via the formation of 2-isopropylmaleate. The polypeptide is 3-isopropylmalate dehydratase large subunit (Staphylococcus aureus (strain MW2)).